A 260-amino-acid polypeptide reads, in one-letter code: Coiled-coil domain-containing protein 127 (260 aa).

Positions 47–135 (ESQKEIEKAR…QIIQEKSQRQ (89 aa)) form a coiled coil.

This chain is Coiled-coil domain-containing protein 127 (Ccdc127), found in Rattus norvegicus (Rat).